The sequence spans 149 residues: Stathmin (149 aa).

Residue A2 is modified to N-acetylalanine. The residue at position 4 (S4) is a Phosphoserine. Residues 4–145 (SDIQVKELEK…NKESKDPADE (142 aa)) form the SLD domain. K9 is subject to N6-acetyllysine. Phosphoserine; by PKA is present on S16. S25 bears the Phosphoserine; by CDK1, MAPK1 and MAPK3 mark. The tract at residues 27 to 46 (RSKESVPDFPLSPPKKKDLS) is disordered. At K29 the chain carries N6-methyllysine. Position 31 is a phosphoserine (S31). Residue S38 is modified to Phosphoserine; by CDK1, MAPK1 and MAPK3. Residues 41-140 (KKKDLSLEEI…EEVRKNKESK (100 aa)) are a coiled coil. At S63 the chain carries Phosphoserine; by PKA. Residues K100 and K119 each carry the N6-acetyllysine modification. A compositionally biased stretch (basic and acidic residues) spans 104–143 (KMEANKENREAQMAAKLERLREKDKHVEEVRKNKESKDPA). The interval 104-149 (KMEANKENREAQMAAKLERLREKDKHVEEVRKNKESKDPADETEAD) is disordered.

The protein belongs to the stathmin family. In terms of assembly, binds to two alpha/beta-tubulin heterodimers. Interacts with KIST. In terms of processing, many different phosphorylated forms are observed depending on specific combinations among the sites which can be phosphorylated. MAPK is responsible for the phosphorylation of stathmin in response to NGF. Phosphorylation at Ser-16 seems to be required for neuron polarization. As to expression, highly expressed in the lateral nucleus of the amygdala.

It localises to the cytoplasm. The protein localises to the cytoskeleton. In terms of biological role, involved in the regulation of the microtubule (MT) filament system by destabilizing microtubules. Prevents assembly and promotes disassembly of microtubules. Phosphorylation at Ser-16 may be required for axon formation during neurogenesis. Involved in the control of the learned and innate fear. The polypeptide is Stathmin (Stmn1) (Mus musculus (Mouse)).